Here is a 206-residue protein sequence, read N- to C-terminus: LexA repressor (206 aa).

The H-T-H motif DNA-binding region spans 28–48; that stretch reads VREIGEAVGLASSSTVHGHLA. Residues Ser-128 and Lys-166 each act as for autocatalytic cleavage activity in the active site.

It belongs to the peptidase S24 family. As to quaternary structure, homodimer.

The enzyme catalyses Hydrolysis of Ala-|-Gly bond in repressor LexA.. Its function is as follows. Represses a number of genes involved in the response to DNA damage (SOS response), including recA and lexA. In the presence of single-stranded DNA, RecA interacts with LexA causing an autocatalytic cleavage which disrupts the DNA-binding part of LexA, leading to derepression of the SOS regulon and eventually DNA repair. In Bacillus velezensis (strain DSM 23117 / BGSC 10A6 / LMG 26770 / FZB42) (Bacillus amyloliquefaciens subsp. plantarum), this protein is LexA repressor.